Reading from the N-terminus, the 265-residue chain is Protein ENDO16 (265 aa).

The Cell attachment site motif lies at 25–27 (RGD). The interval 71–265 (SPNAPSSQME…KEEEEEERSG (195 aa)) is disordered. Polar residues predominate over residues 73 to 92 (NAPSSQMESEGSANPSTIGS). Repeat copies occupy residues 75–94 (PSSQ…GSVS), 105–124 (ESER…ETEG), 128–147 (PHEQ…GAEQ), and 148–167 (PQEQ…DVDS). The interval 75 to 257 (PSSQMESEGS…QSESEDPEKE (183 aa)) is 6 X approximate repeats. 6 stretches are compositionally biased toward acidic residues: residues 112–125 (EGSE…TEGA), 133–144 (ESEGGDQEESEG), 152–169 (MESE…DSGE), 194–212 (EVDE…EEPG), 222–243 (ESEG…EVIE), and 250–265 (ESED…ERSG). 2 repeat units span residues 217-236 (PHEQ…EEVE) and 238-257 (PQEV…PEKE). A glycan (N-linked (GlcNAc...) asparagine) is linked at asparagine 228.

First expressed in the vegetal plate and progressively the expression becomes restricted to a subset of endodermal cells as development proceeds.

Its function is as follows. May be an adhesion molecule involved in gastrulation of the sea urchin embryo. This is Protein ENDO16 (ENDO16) from Strongylocentrotus purpuratus (Purple sea urchin).